Here is a 194-residue protein sequence, read N- to C-terminus: Imidazoleglycerol-phosphate dehydratase (194 aa).

It belongs to the imidazoleglycerol-phosphate dehydratase family.

The protein resides in the cytoplasm. The catalysed reaction is D-erythro-1-(imidazol-4-yl)glycerol 3-phosphate = 3-(imidazol-4-yl)-2-oxopropyl phosphate + H2O. The protein operates within amino-acid biosynthesis; L-histidine biosynthesis; L-histidine from 5-phospho-alpha-D-ribose 1-diphosphate: step 6/9. This chain is Imidazoleglycerol-phosphate dehydratase, found in Chlorobaculum parvum (strain DSM 263 / NCIMB 8327) (Chlorobium vibrioforme subsp. thiosulfatophilum).